The sequence spans 417 residues: Serine hydroxymethyltransferase (417 aa).

Residues Leu-121 and 125-127 each bind (6S)-5,6,7,8-tetrahydrofolate; that span reads GHL. Lys-229 carries the N6-(pyridoxal phosphate)lysine modification. 355–357 contributes to the (6S)-5,6,7,8-tetrahydrofolate binding site; the sequence is SPF.

Belongs to the SHMT family. Homodimer. Pyridoxal 5'-phosphate is required as a cofactor.

The protein resides in the cytoplasm. The enzyme catalyses (6R)-5,10-methylene-5,6,7,8-tetrahydrofolate + glycine + H2O = (6S)-5,6,7,8-tetrahydrofolate + L-serine. It participates in one-carbon metabolism; tetrahydrofolate interconversion. It functions in the pathway amino-acid biosynthesis; glycine biosynthesis; glycine from L-serine: step 1/1. Its function is as follows. Catalyzes the reversible interconversion of serine and glycine with tetrahydrofolate (THF) serving as the one-carbon carrier. This reaction serves as the major source of one-carbon groups required for the biosynthesis of purines, thymidylate, methionine, and other important biomolecules. Also exhibits THF-independent aldolase activity toward beta-hydroxyamino acids, producing glycine and aldehydes, via a retro-aldol mechanism. The polypeptide is Serine hydroxymethyltransferase (Enterobacter sp. (strain 638)).